Reading from the N-terminus, the 556-residue chain is Phosphomethylpyrimidine synthase (556 aa).

Residues N191, M220, Y249, H285, 305–307 (SRG), 346–349 (DALR), and E385 contribute to the substrate site. Residue H389 coordinates Zn(2+). Y412 provides a ligand contact to substrate. Zn(2+) is bound at residue H453. The [4Fe-4S] cluster site is built by C535, C538, and C543.

The protein belongs to the ThiC family. Requires [4Fe-4S] cluster as cofactor.

The enzyme catalyses 5-amino-1-(5-phospho-beta-D-ribosyl)imidazole + S-adenosyl-L-methionine = 4-amino-2-methyl-5-(phosphooxymethyl)pyrimidine + CO + 5'-deoxyadenosine + formate + L-methionine + 3 H(+). Its pathway is cofactor biosynthesis; thiamine diphosphate biosynthesis. Its function is as follows. Catalyzes the synthesis of the hydroxymethylpyrimidine phosphate (HMP-P) moiety of thiamine from aminoimidazole ribotide (AIR) in a radical S-adenosyl-L-methionine (SAM)-dependent reaction. This chain is Phosphomethylpyrimidine synthase, found in Chlorobaculum tepidum (strain ATCC 49652 / DSM 12025 / NBRC 103806 / TLS) (Chlorobium tepidum).